Here is a 233-residue protein sequence, read N- to C-terminus: Orotidine 5'-phosphate decarboxylase (233 aa).

Residues aspartate 10, lysine 32, 59–68 (DLKFHDIPNT), threonine 119, arginine 180, glutamine 189, glycine 209, and arginine 210 contribute to the substrate site. Residue lysine 61 is the Proton donor of the active site.

Belongs to the OMP decarboxylase family. Type 1 subfamily. In terms of assembly, homodimer.

It catalyses the reaction orotidine 5'-phosphate + H(+) = UMP + CO2. The protein operates within pyrimidine metabolism; UMP biosynthesis via de novo pathway; UMP from orotate: step 2/2. Catalyzes the decarboxylation of orotidine 5'-monophosphate (OMP) to uridine 5'-monophosphate (UMP). The polypeptide is Orotidine 5'-phosphate decarboxylase (Pasteurella multocida (strain Pm70)).